The chain runs to 155 residues: Cytochrome c-type biogenesis protein CcmE (155 aa).

Over 1–8 the chain is Cytoplasmic; that stretch reads MNPVRKRR. The chain crosses the membrane as a helical; Signal-anchor for type II membrane protein span at residues 9 to 29; the sequence is LFIVLAILAGVGAAVALALSA. Residues 30 to 155 are Periplasmic-facing; sequence LQQNINLFYT…YENGKPGGAQ (126 aa). His124 and Tyr128 together coordinate heme.

Belongs to the CcmE/CycJ family.

It is found in the cell inner membrane. In terms of biological role, heme chaperone required for the biogenesis of c-type cytochromes. Transiently binds heme delivered by CcmC and transfers the heme to apo-cytochromes in a process facilitated by CcmF and CcmH. This Azotobacter vinelandii (strain DJ / ATCC BAA-1303) protein is Cytochrome c-type biogenesis protein CcmE.